The following is a 117-amino-acid chain: Transcription elongation factor A protein-like 8 (117 aa).

A disordered region spans residues 1–82 (MQKSCDENEG…EEVIRGVDEL (82 aa)). Over residues 41–82 (NVREETEGSHRGEPAEPSPEPKEDTPARHLNPEEVIRGVDEL) the composition is skewed to basic and acidic residues. Residues 73 to 100 (EEVIRGVDELERLREEIRRVRNKFVLMH) are a coiled coil.

It belongs to the TFS-II family. TFA subfamily.

It localises to the nucleus. In terms of biological role, may be involved in transcriptional regulation. The protein is Transcription elongation factor A protein-like 8 (Tceal8) of Mus musculus (Mouse).